Consider the following 468-residue polypeptide: MEPQPGGARSCRRGAPGGACELGPAAEAAPMSLAIHSTTGTRYDLAVPPDETVEGLRKRLSQRLKVPKERLALLHKDTRLSSGKLQEFGVGDGSKLTLVPTVEAGLMSQASRPEQSVMQALESLTETQVSDFLSGRSPLTLALRVGDHMMFVQLQLAAQHAPLQHRHVLAAAAAAAAARGDPSIASPVSSPCRPVSSAARVPPVPTSPSPASPSPITAGSFRSHAASTTCPEQMDCSPTASSSASPGASTTSTPGASPAPRSRKPGAVIESFVNHAPGVFSGTFSGTLHPNCQDSSGRPRRDIGTILQILNDLLSATRHYQGMPPSLAQLRCHAQCSPASPAPDLAPRTTSCEKLTAAPSASLLQGQSQIRMCKPPGDRLRQTENRATRCKVERLQLLLQQKRLRRKARRDARGPYHWSPSRKAGRSDSSSSGGGGSPSEASGLGLDFEDSVWKPEVNPDIKSEFVVA.

One can recognise a Ubiquitin-like domain in the interval 31–105; it reads MSLAIHSTTG…LTLVPTVEAG (75 aa). 2 disordered regions span residues 182 to 264 and 404 to 447; these read PSIA…RSRK and LRRK…LGLD. A compositionally biased stretch (low complexity) spans 185–201; sequence ASPVSSPCRPVSSAARV. Residues 202-213 are compositionally biased toward pro residues; sequence PPVPTSPSPASP. Composition is skewed to low complexity over residues 237–260 and 419–431; these read SPTA…SPAP and SPSR…DSSS.

Interacts with GCK; the interaction occurs preferentially at low glucose levels. Interacts with the proteasome.

It is found in the nucleus. Its subcellular location is the nucleolus. The protein resides in the cytoplasm. The protein localises to the cytosol. Facilitates the ubiquitin-independent proteasomal degradation of stimulus-induced transcription factors such as FOSB, EGR1, NR4A1, and IRF4 to the proteasome for degradation. Promotes also the degradation of other substrates such as CBX4. Plays a role in inhibiting the activity of glucokinase GCK and both glucose-induced and basal insulin secretion. The protein is Midnolin (MIDN) of Homo sapiens (Human).